A 245-amino-acid chain; its full sequence is NAD(P)H-hydrate epimerase (245 aa).

Positions Met-21–Thr-221 constitute a YjeF N-terminal domain. Gly-72–Gly-76 contributes to the (6S)-NADPHX binding site. Asn-73 and Asp-135 together coordinate K(+). (6S)-NADPHX is bound by residues Gly-139 to Ala-145 and Asp-168. Position 171 (Ser-171) interacts with K(+).

This sequence belongs to the NnrE/AIBP family. K(+) is required as a cofactor.

The enzyme catalyses (6R)-NADHX = (6S)-NADHX. It carries out the reaction (6R)-NADPHX = (6S)-NADPHX. Catalyzes the epimerization of the S- and R-forms of NAD(P)HX, a damaged form of NAD(P)H that is a result of enzymatic or heat-dependent hydration. This is a prerequisite for the S-specific NAD(P)H-hydrate dehydratase to allow the repair of both epimers of NAD(P)HX. In Dehalogenimonas lykanthroporepellens (strain ATCC BAA-1523 / JCM 15061 / BL-DC-9), this protein is NAD(P)H-hydrate epimerase.